Consider the following 55-residue polypeptide: Large ribosomal subunit protein bL33 (55 aa).

Belongs to the bacterial ribosomal protein bL33 family.

The chain is Large ribosomal subunit protein bL33 from Bifidobacterium longum (strain DJO10A).